We begin with the raw amino-acid sequence, 642 residues long: 1-deoxy-D-xylulose-5-phosphate synthase (642 aa).

Thiamine diphosphate is bound by residues His79 and Ala120–Ser122. Mg(2+) is bound at residue Asp155. Thiamine diphosphate contacts are provided by residues Gly156 to Ser157, Asn184, Tyr293, and Glu375. Asn184 contacts Mg(2+).

Belongs to the transketolase family. DXPS subfamily. In terms of assembly, homodimer. It depends on Mg(2+) as a cofactor. Requires thiamine diphosphate as cofactor.

The enzyme catalyses D-glyceraldehyde 3-phosphate + pyruvate + H(+) = 1-deoxy-D-xylulose 5-phosphate + CO2. It functions in the pathway metabolic intermediate biosynthesis; 1-deoxy-D-xylulose 5-phosphate biosynthesis; 1-deoxy-D-xylulose 5-phosphate from D-glyceraldehyde 3-phosphate and pyruvate: step 1/1. Catalyzes the acyloin condensation reaction between C atoms 2 and 3 of pyruvate and glyceraldehyde 3-phosphate to yield 1-deoxy-D-xylulose-5-phosphate (DXP). This Ruegeria pomeroyi (strain ATCC 700808 / DSM 15171 / DSS-3) (Silicibacter pomeroyi) protein is 1-deoxy-D-xylulose-5-phosphate synthase.